The chain runs to 282 residues: HTH-type transcriptional activator RhaR (282 aa).

In terms of domain architecture, HTH araC/xylS-type spans 179–277; that stretch reads DKLITALANS…GMTPSQWRHL (99 aa). DNA-binding regions (H-T-H motif) lie at residues 196–217 and 244–267; these read DAFC…RAQT and ISEI…TRET.

Binds DNA as a dimer.

The protein localises to the cytoplasm. In terms of biological role, activates expression of the rhaSR operon in response to L-rhamnose. This chain is HTH-type transcriptional activator RhaR, found in Salmonella agona (strain SL483).